Consider the following 463-residue polypeptide: Aurantioclavine synthase cnsA (463 aa).

The 184-residue stretch at 16-199 (ERFNQRGNVF…TQATVRVFPD (184 aa)) folds into the FAD-binding PCMH-type domain.

Belongs to the oxygen-dependent FAD-linked oxidoreductase family. Requires FAD as cofactor.

Its pathway is alkaloid biosynthesis. FAD-linked oxidoreductase; part of the gene cluster that mediates the biosynthesis of communesins, a prominent class of indole alkaloids with great potential as pharmaceuticals. Communesins are biosynthesized by the coupling of tryptamine and aurantioclavine, two building blocks derived from L-tryptophan. The L-tryptophan decarboxylase cnsB converts L-tryptophan to tryptamine, whereas the tryptophan dimethylallyltransferase cnsF converts L-tryptophan to 4-dimethylallyl tryptophan which is further transformed to aurantioclavine by the aurantioclavine synthase cnsA, probably aided by the catalase cnsD. The cytochrome P450 monooxygenase cnsC catalyzes the heterodimeric coupling between the two different indole moieties, tryptamine and aurantioclavine, to construct vicinal quaternary stereocenters and yield the heptacyclic communesin scaffold. The O-methyltransferase cnsE then methylates the communesin scaffold to produce communesin K, the simplest characterized communesin that contains the heptacyclic core. The dioxygenase cnsJ converts communesin K into communesin I. Acylation to introduce the hexadienyl group at position N16 of communesin I by the acyltransferase cnsK leads to the production of communesin B. The hexadienyl group is produced by the highly reducing polyketide synthase cnsI, before being hydrolytically removed from cnsI by the serine hydrolase cnsH, converted into hexadienyl-CoA by the CoA ligase cnsG, and then transferred to communesin I by cnsK. Surprisingly, cnsK may also be a promiscuous acyltransferase that can tolerate a range of acyl groups, including acetyl-, propionyl-, and butyryl-CoA, which lead to communesins A, G and H respectively. The roles of the alpha-ketoglutarate-dependent dioxygenases cnsM and cnsP have still to be determined. This Penicillium expansum (Blue mold rot fungus) protein is Aurantioclavine synthase cnsA.